A 188-amino-acid polypeptide reads, in one-letter code: Photosystem I assembly protein Ycf4 (188 aa).

2 consecutive transmembrane segments (helical) span residues 22–42 and 68–88; these read LGWA…GLSS and LVMC…WCAI.

It belongs to the Ycf4 family.

It is found in the plastid. Its subcellular location is the chloroplast thylakoid membrane. Seems to be required for the assembly of the photosystem I complex. In Zygnema circumcarinatum (Green alga), this protein is Photosystem I assembly protein Ycf4.